The chain runs to 164 residues: Cyclic pyranopterin monophosphate synthase (164 aa).

Residues 75-77 (MCH) and 116-117 (ME) contribute to the substrate site. Asp-131 is an active-site residue.

Belongs to the MoaC family. Homohexamer; trimer of dimers.

The catalysed reaction is (8S)-3',8-cyclo-7,8-dihydroguanosine 5'-triphosphate = cyclic pyranopterin phosphate + diphosphate. It functions in the pathway cofactor biosynthesis; molybdopterin biosynthesis. Functionally, catalyzes the conversion of (8S)-3',8-cyclo-7,8-dihydroguanosine 5'-triphosphate to cyclic pyranopterin monophosphate (cPMP). The polypeptide is Cyclic pyranopterin monophosphate synthase (Staphylococcus aureus (strain Mu3 / ATCC 700698)).